The sequence spans 124 residues: Nascent polypeptide-associated complex protein (124 aa).

Positions 7–74 (GLNPRKMKQM…PESRERGDSG (68 aa)) constitute an NAC-A/B domain. A disordered region spans residues 53-124 (AQGQQTYQVV…DLAAAVQKLE (72 aa)). Positions 74 to 93 (GSEDDSETESGGEFSEDDVE) are enriched in acidic residues.

It belongs to the NAC-alpha family. Homodimer. Interacts with the ribosome. Binds ribosomal RNA.

Contacts the emerging nascent chain on the ribosome. The sequence is that of Nascent polypeptide-associated complex protein from Natronomonas pharaonis (strain ATCC 35678 / DSM 2160 / CIP 103997 / JCM 8858 / NBRC 14720 / NCIMB 2260 / Gabara) (Halobacterium pharaonis).